A 366-amino-acid polypeptide reads, in one-letter code: tRNA/tmRNA (uracil-C(5))-methyltransferase (366 aa).

S-adenosyl-L-methionine is bound by residues Gln-190, Tyr-218, Asn-223, Glu-239, and Asp-299. Cys-324 serves as the catalytic Nucleophile. The active-site Proton acceptor is Glu-358.

The protein belongs to the class I-like SAM-binding methyltransferase superfamily. RNA M5U methyltransferase family. TrmA subfamily.

The catalysed reaction is uridine(54) in tRNA + S-adenosyl-L-methionine = 5-methyluridine(54) in tRNA + S-adenosyl-L-homocysteine + H(+). It catalyses the reaction uridine(341) in tmRNA + S-adenosyl-L-methionine = 5-methyluridine(341) in tmRNA + S-adenosyl-L-homocysteine + H(+). Functionally, dual-specificity methyltransferase that catalyzes the formation of 5-methyluridine at position 54 (m5U54) in all tRNAs, and that of position 341 (m5U341) in tmRNA (transfer-mRNA). This chain is tRNA/tmRNA (uracil-C(5))-methyltransferase, found in Salmonella paratyphi A (strain ATCC 9150 / SARB42).